The following is a 475-amino-acid chain: Ribulose bisphosphate carboxylase large chain (475 aa).

A propeptide spanning residues 1-2 (MS) is cleaved from the precursor. Proline 3 is subject to N-acetylproline. Lysine 14 is modified (N6,N6,N6-trimethyllysine). Positions 123 and 173 each coordinate substrate. Lysine 175 acts as the Proton acceptor in catalysis. Position 177 (lysine 177) interacts with substrate. Mg(2+) is bound by residues lysine 201, aspartate 203, and glutamate 204. An N6-carboxylysine modification is found at lysine 201. Histidine 294 (proton acceptor) is an active-site residue. Residues arginine 295, histidine 327, and serine 379 each coordinate substrate.

The protein belongs to the RuBisCO large chain family. Type I subfamily. As to quaternary structure, heterohexadecamer of 8 large chains and 8 small chains; disulfide-linked. The disulfide link is formed within the large subunit homodimers. Mg(2+) serves as cofactor. The disulfide bond which can form in the large chain dimeric partners within the hexadecamer appears to be associated with oxidative stress and protein turnover.

It localises to the plastid. It is found in the chloroplast. The catalysed reaction is 2 (2R)-3-phosphoglycerate + 2 H(+) = D-ribulose 1,5-bisphosphate + CO2 + H2O. It catalyses the reaction D-ribulose 1,5-bisphosphate + O2 = 2-phosphoglycolate + (2R)-3-phosphoglycerate + 2 H(+). In terms of biological role, ruBisCO catalyzes two reactions: the carboxylation of D-ribulose 1,5-bisphosphate, the primary event in carbon dioxide fixation, as well as the oxidative fragmentation of the pentose substrate in the photorespiration process. Both reactions occur simultaneously and in competition at the same active site. The protein is Ribulose bisphosphate carboxylase large chain of Gossypium hirsutum (Upland cotton).